We begin with the raw amino-acid sequence, 384 residues long: Chaperone protein DnaJ (384 aa).

The region spanning 4 to 68 is the J domain; it reads DFYDVLGVSR…EKRQMYDQLG (65 aa). Disordered stretches follow at residues 74 to 105 and 113 to 132; these read QAQK…GMGG and NNLF…QGRD. The span at 79 to 105 shows a compositional bias: gly residues; it reads GAGGGGGGRGQGNPFGGGGNPFGGMGG. Residues 147–229 form a CR-type zinc finger; it reads GVERDVTIRR…CRGSGRVRRT (83 aa). Residues cysteine 160, cysteine 163, cysteine 177, cysteine 180, cysteine 203, cysteine 206, cysteine 217, and cysteine 220 each contribute to the Zn(2+) site. CXXCXGXG motif repeat units follow at residues 160–167, 177–184, 203–210, and 217–224; these read CPECDGEG, CSECNGSG, CRACGGEG, and CSECRGSG.

The protein belongs to the DnaJ family. Homodimer. Requires Zn(2+) as cofactor.

It is found in the cytoplasm. Its function is as follows. Participates actively in the response to hyperosmotic and heat shock by preventing the aggregation of stress-denatured proteins and by disaggregating proteins, also in an autonomous, DnaK-independent fashion. Unfolded proteins bind initially to DnaJ; upon interaction with the DnaJ-bound protein, DnaK hydrolyzes its bound ATP, resulting in the formation of a stable complex. GrpE releases ADP from DnaK; ATP binding to DnaK triggers the release of the substrate protein, thus completing the reaction cycle. Several rounds of ATP-dependent interactions between DnaJ, DnaK and GrpE are required for fully efficient folding. Also involved, together with DnaK and GrpE, in the DNA replication of plasmids through activation of initiation proteins. This is Chaperone protein DnaJ from Haloferax mediterranei (strain ATCC 33500 / DSM 1411 / JCM 8866 / NBRC 14739 / NCIMB 2177 / R-4) (Halobacterium mediterranei).